Consider the following 235-residue polypeptide: MAKHGKNYREAIKDIDLTAKYEVSEAMALTVQTGKAKFDETVDVALNLGVNPKYSDQMVRGAVSLPHGLGKTIRVAAFCKGDKETEAREAGADFVGGDDLIEKVKNGFLDFDSAVATPDMMASVGKIGKILGPRGLMPNAKTGTVSFDIGKAVSELKAGKVEFKVDKAGVLHVPLGKRSFGPEKLLDNFRAVIDAVMRLKPSAAKGTYLQAMALATTMGPGIKVDTQSVRKLLEG.

Belongs to the universal ribosomal protein uL1 family. Part of the 50S ribosomal subunit.

Functionally, binds directly to 23S rRNA. The L1 stalk is quite mobile in the ribosome, and is involved in E site tRNA release. Its function is as follows. Protein L1 is also a translational repressor protein, it controls the translation of the L11 operon by binding to its mRNA. The polypeptide is Large ribosomal subunit protein uL1 (Solidesulfovibrio magneticus (strain ATCC 700980 / DSM 13731 / RS-1) (Desulfovibrio magneticus)).